We begin with the raw amino-acid sequence, 483 residues long: Glutamyl-tRNA(Gln) amidotransferase subunit A (483 aa).

Catalysis depends on charge relay system residues K77 and S152. S176 functions as the Acyl-ester intermediate in the catalytic mechanism.

This sequence belongs to the amidase family. GatA subfamily. In terms of assembly, heterotrimer of A, B and C subunits.

It carries out the reaction L-glutamyl-tRNA(Gln) + L-glutamine + ATP + H2O = L-glutaminyl-tRNA(Gln) + L-glutamate + ADP + phosphate + H(+). Its function is as follows. Allows the formation of correctly charged Gln-tRNA(Gln) through the transamidation of misacylated Glu-tRNA(Gln) in organisms which lack glutaminyl-tRNA synthetase. The reaction takes place in the presence of glutamine and ATP through an activated gamma-phospho-Glu-tRNA(Gln). The sequence is that of Glutamyl-tRNA(Gln) amidotransferase subunit A from Listeria welshimeri serovar 6b (strain ATCC 35897 / DSM 20650 / CCUG 15529 / CIP 8149 / NCTC 11857 / SLCC 5334 / V8).